We begin with the raw amino-acid sequence, 395 residues long: DDB1- and CUL4-associated factor 4-like protein 2 (395 aa).

WD repeat units follow at residues 268 to 307 (SHDSAVTSLQILQDGQFLVSSDMTGTIKLWDLRATKCVTQ) and 312 to 351 (VNNSAYLPVHVNEEEGVVAAVGQDCYTRIWSLRHGHLLTT).

The chain is DDB1- and CUL4-associated factor 4-like protein 2 (DCAF4L2) from Homo sapiens (Human).